A 146-amino-acid chain; its full sequence is Keratin-associated protein 4-1 (146 aa).

Repeat copies occupy residues 5–9 (CCGSV), 24–28 (CCRPS), 29–33 (CCQTT), 34–38 (CCCPS), 44–48 (CCRPS), 54–58 (CCQTT), 59–63 (CCRPS), 64–68 (CCHPV), 69–73 (CCQTT), 83–87 (CCRPL), 88–92 (CCQTT), 102–106 (CCRPL), 107–111 (CCQTT), 121–125 (CCRPL), 126–130 (CCQTT), 131–135 (CCRAT), 136–140 (CCRPS), and 141–145 (CCGSS). The tract at residues 5 to 145 (CCGSVCSDQG…CCRPSCCGSS (141 aa)) is 18 X 5 AA repeats of C-C-[GRQC]-[SPT]-[VSTL].

The protein belongs to the KRTAP type 4 family. Interacts with hair keratins. In terms of tissue distribution, expressed in the hair follicles.

In the hair cortex, hair keratin intermediate filaments are embedded in an interfilamentous matrix, consisting of hair keratin-associated proteins (KRTAP), which are essential for the formation of a rigid and resistant hair shaft through their extensive disulfide bond cross-linking with abundant cysteine residues of hair keratins. The matrix proteins include the high-sulfur and high-glycine-tyrosine keratins. The chain is Keratin-associated protein 4-1 (KRTAP4-1) from Homo sapiens (Human).